The following is a 727-amino-acid chain: Catalase-peroxidase (727 aa).

Residues 1 to 24 (MDQKSDSAGKCPVAHTAPRGRSNR) form a disordered region. A cross-link (tryptophyl-tyrosyl-methioninium (Trp-Tyr) (with M-243)) is located at residues 95–217 (WHSAGTYRIT…LAAVQMGLIY (123 aa)). H96 (proton acceptor) is an active-site residue. A cross-link (tryptophyl-tyrosyl-methioninium (Tyr-Met) (with W-95)) is located at residues 217 to 243 (YVNPEGPNGNPDPVAAARDIRETFARM). H258 serves as a coordination point for heme b.

This sequence belongs to the peroxidase family. Peroxidase/catalase subfamily. Homodimer or homotetramer. It depends on heme b as a cofactor. In terms of processing, formation of the three residue Trp-Tyr-Met cross-link is important for the catalase, but not the peroxidase activity of the enzyme.

It catalyses the reaction H2O2 + AH2 = A + 2 H2O. It carries out the reaction 2 H2O2 = O2 + 2 H2O. In terms of biological role, bifunctional enzyme with both catalase and broad-spectrum peroxidase activity. This is Catalase-peroxidase from Rhizobium meliloti (strain 1021) (Ensifer meliloti).